Consider the following 376-residue polypeptide: uncharacterized protein (376 aa).

The N-terminal stretch at 1 to 22 is a signal peptide; it reads MVATGRIIITLLAAALDEIILA.

This sequence belongs to the ascovirus HvAV ORF17 family.

This is an uncharacterized protein from Heliothis virescens ascovirus 3e (HvAV-3e).